A 141-amino-acid polypeptide reads, in one-letter code: Lutropin subunit beta (141 aa).

The first 18 residues, 1-18 (MGTLQGLLLWLLLGTGGA), serve as a signal peptide directing secretion. Intrachain disulfides connect Cys29/Cys77, Cys43/Cys92, Cys46/Cys130, Cys54/Cys108, Cys58/Cys110, and Cys113/Cys120. An N-linked (GlcNAc...) asparagine glycan is attached at Asn33.

The protein belongs to the glycoprotein hormones subunit beta family. In terms of assembly, heterodimer of a common alpha chain and a unique beta chain which confers biological specificity to thyrotropin, lutropin, follitropin and gonadotropin.

The protein resides in the secreted. Promotes spermatogenesis and ovulation by stimulating the testes and ovaries to synthesize steroids. In Oryctolagus cuniculus (Rabbit), this protein is Lutropin subunit beta (LHB).